The sequence spans 304 residues: Nod factor export ATP-binding protein I (304 aa).

Residues 6-236 (IDFRNVEKRF…EIGCDVIEIY (231 aa)) form the ABC transporter domain. Position 38–45 (38–45 (GPNGAGKT)) interacts with ATP.

This sequence belongs to the ABC transporter superfamily. Lipooligosaccharide exporter (TC 3.A.1.102) family. The complex is composed of two ATP-binding proteins (NodI) and two transmembrane proteins (NodJ).

The protein resides in the cell inner membrane. Part of the ABC transporter complex NodIJ involved in the export of the nodulation factors (Nod factors), the bacterial signal molecules that induce symbiosis and subsequent nodulation induction. Nod factors are LCO (lipo-chitin oligosaccharide), a modified beta-1,4-linked N-acetylglucosamine oligosaccharide. This subunit is responsible for energy coupling to the transport system. In Burkholderia lata (strain ATCC 17760 / DSM 23089 / LMG 22485 / NCIMB 9086 / R18194 / 383), this protein is Nod factor export ATP-binding protein I.